Reading from the N-terminus, the 485-residue chain is ATP-dependent rRNA helicase RRP3 (485 aa).

Over residues 1 to 10 (MPVLKKRKLA) the composition is skewed to basic residues. Residues 1–55 (MPVLKKRKLAHTAQPDPIVSDLESSSSEASQQSHDEQLTAANEQDDESPQVQREE) form a disordered region. Over residues 20–32 (SDLESSSSEASQQ) the composition is skewed to low complexity. The Q motif motif lies at 59–87 (KSFKDLGIIDSLCEACEALGYKSPTPIQA). The Helicase ATP-binding domain occupies 90-261 (IPLALQGRDL…RASLSNPLRV (172 aa)). ATP is bound at residue 103-110 (AETGSGKT). Positions 209–212 (DEAD) match the DEAD box motif. The Helicase C-terminal domain occupies 285–433 (YKDIYLVYLL…EYKVEKEEVM (149 aa)). A compositionally biased stretch (basic and acidic residues) spans 449–458 (EMKDLHEKRG). Residues 449–485 (EMKDLHEKRGSRGATLKGRRPAKGAKRGRDEMDREEG) are disordered. Residues 465–474 (KGRRPAKGAK) are compositionally biased toward basic residues. Positions 475–485 (RGRDEMDREEG) are enriched in basic and acidic residues.

Belongs to the DEAD box helicase family. DDX47/RRP3 subfamily. Interacts with the SSU processome.

It is found in the nucleus. The catalysed reaction is ATP + H2O = ADP + phosphate + H(+). Its function is as follows. ATP-dependent rRNA helicase required for pre-ribosomal RNA processing. Involved in the maturation of the 35S-pre-rRNA and to its cleavage to mature 18S rRNA. This is ATP-dependent rRNA helicase RRP3 from Ajellomyces capsulatus (strain NAm1 / WU24) (Darling's disease fungus).